The following is an 862-amino-acid chain: Taxadiene synthase (862 aa).

The Mg(2+) site is built by Asp-613, Asp-617, Asn-757, Thr-761, and Glu-765. Residues 613–617 (DDMAD) carry the DDXXD motif motif.

Belongs to the terpene synthase family. The cofactor is Mg(2+).

The catalysed reaction is (2E,6E,10E)-geranylgeranyl diphosphate = taxa-4(5),11(12)-diene + diphosphate. It functions in the pathway alkaloid biosynthesis; taxol biosynthesis; taxa-4(20),11-dien-5alpha-ol from geranylgeranyl diphosphate: step 1/2. Functionally, catalyzes the cyclization of the ubiquitous isoprenoid intermediate geranylgeranyl diphosphate to taxa-4,11-diene, the parent olefin with a taxane skeleton. The polypeptide is Taxadiene synthase (TDC1) (Taxus baccata (English yew)).